A 344-amino-acid polypeptide reads, in one-letter code: Microcin C7 self-immunity protein MccF (344 aa).

This sequence belongs to the peptidase S66 family.

Its function is as follows. Involved in specific self-immunity to microcin C7. The protein is Microcin C7 self-immunity protein MccF (mccF) of Escherichia coli.